We begin with the raw amino-acid sequence, 386 residues long: tRNA N6-adenosine threonylcarbamoyltransferase (386 aa).

Fe cation contacts are provided by histidine 112 and histidine 116. Substrate contacts are provided by residues 134–138 (LASGG), aspartate 167, glycine 180, and asparagine 322. Aspartate 350 is a binding site for Fe cation.

This sequence belongs to the KAE1 / TsaD family. The cofactor is Fe(2+).

The protein localises to the cytoplasm. The enzyme catalyses L-threonylcarbamoyladenylate + adenosine(37) in tRNA = N(6)-L-threonylcarbamoyladenosine(37) in tRNA + AMP + H(+). Functionally, required for the formation of a threonylcarbamoyl group on adenosine at position 37 (t(6)A37) in tRNAs that read codons beginning with adenine. Is involved in the transfer of the threonylcarbamoyl moiety of threonylcarbamoyl-AMP (TC-AMP) to the N6 group of A37, together with TsaE and TsaB. TsaD likely plays a direct catalytic role in this reaction. The sequence is that of tRNA N6-adenosine threonylcarbamoyltransferase from Rickettsia akari (strain Hartford).